Consider the following 141-residue polypeptide: MQHARKKFRVGRTSSHNRCMLANMLKSLIHNERIETTLPKAKELRRHADKMITLAKKNTLAARRLAVGRLMVRYNTLTSKEARQVKAGDLSAYNVDRRVIGKLFDVLATRFSSRNGGYTRILKLQNRVGDNAQKCIIEFLA.

Belongs to the bacterial ribosomal protein bL17 family. As to quaternary structure, part of the 50S ribosomal subunit. Contacts protein L32.

The sequence is that of Large ribosomal subunit protein bL17 from Chlamydia trachomatis serovar D (strain ATCC VR-885 / DSM 19411 / UW-3/Cx).